Reading from the N-terminus, the 461-residue chain is Decaprenylphosphoryl-beta-D-ribose oxidase (461 aa).

An FAD-binding PCMH-type domain is found at 19 to 194 (TAPSVANVLR…MRATIEMTPT (176 aa)). FAD-binding positions include 53–63 (ARGLGRSYGDN), G117, 122–125 (TVGG), 129–132 (CDIH), I184, and Y415.

The protein belongs to the DprE1 family. As to quaternary structure, monomer. Although forming apparent dimer in crystals, DprE1 does not dimerize appreciably in solution. Interacts with DprE2 to form an epimerase complex.

It localises to the periplasm. It catalyses the reaction trans,octa-cis-decaprenylphospho-beta-D-ribofuranose + FAD + H(+) = trans,octa-cis-decaprenylphospho-beta-D-erythro-pentofuranosid-2-ulose + FADH2. Its pathway is cell wall biogenesis; cell wall polysaccharide biosynthesis. Its activity is regulated as follows. Is inhibited by 8-nitro-benzothiazinones (BTZs) such as BTZ043 and PBTZ169; BTZs are a new class of antimycobacterial agents that kill M.tuberculosis in vitro, ex vivo, and in mouse models of tuberculosis. Is also inhibited by dinitrobenzamide derivatives (DNBs), which thus block formation of both cell-wall lipoarabinomannan and arabinogalactan via inhibition of decaprenyl-phospho-arabinose (DPA) synthesis; DNBs show high activity against intracellular growth of M.tuberculosis inside macrophages, including extensively drug resistant (XDR) strains. BTZs and DNBs are suicide inhibitors that act via covalent modification of DprE1; the essential nitro group of these compounds is reduced by DprE1 to a nitroso group, which then specifically reacts with Cys-387 of DprE1 to form an irreversible semimercaptal adduct. Many other compounds with diverse scaffolds were found to act as either covalent (e.g. nitroquinoxalines, nitroimidazoles) or non-covalent (e.g. the benzothiazole derivative TCA1, the 2-carboxyquinoxaline Ty38C, 8-pyrrole-benzothiazinones, 1,4-azaindoles, pyrazolopyridones, 4-aminoquinolone piperidine amides) DprE1 inhibitors. Functionally, component of the DprE1-DprE2 complex that catalyzes the 2-step epimerization of decaprenyl-phospho-ribose (DPR) to decaprenyl-phospho-arabinose (DPA), a key precursor that serves as the arabinose donor required for the synthesis of cell-wall arabinans. DprE1 catalyzes the first step of epimerization, namely FAD-dependent oxidation of the C2' hydroxyl of DPR to yield the keto intermediate decaprenyl-phospho-2'-keto-D-arabinose (DPX). The intermediate DPX is then transferred to DprE2 subunit of the epimerase complex, most probably through a 'substrate channel' at the interface of DprE1-DprE2 complex. Can also use farnesyl-phosphoryl-beta-D-ribofuranose (FPR) as substrate in vitro. DprE1 is a highly vulnerable and fully validated tuberculosis drug target. This is Decaprenylphosphoryl-beta-D-ribose oxidase from Mycobacterium tuberculosis (strain CDC 1551 / Oshkosh).